The primary structure comprises 322 residues: Ribonuclease Z (322 aa).

Zn(2+) is bound by residues histidine 62, histidine 64, aspartate 66, histidine 67, histidine 139, aspartate 210, and histidine 268. Aspartate 66 functions as the Proton acceptor in the catalytic mechanism.

It belongs to the RNase Z family. Homodimer. The cofactor is Zn(2+).

It carries out the reaction Endonucleolytic cleavage of RNA, removing extra 3' nucleotides from tRNA precursor, generating 3' termini of tRNAs. A 3'-hydroxy group is left at the tRNA terminus and a 5'-phosphoryl group is left at the trailer molecule.. Functionally, zinc phosphodiesterase, which displays some tRNA 3'-processing endonuclease activity. Probably involved in tRNA maturation, by removing a 3'-trailer from precursor tRNA. This Nostoc sp. (strain PCC 7120 / SAG 25.82 / UTEX 2576) protein is Ribonuclease Z.